We begin with the raw amino-acid sequence, 97 residues long: Exodeoxyribonuclease 7 small subunit (97 aa).

The disordered stretch occupies residues 1–22 (MAKTASPGATPPGNGTEPLPDN).

The protein belongs to the XseB family. As to quaternary structure, heterooligomer composed of large and small subunits.

Its subcellular location is the cytoplasm. The enzyme catalyses Exonucleolytic cleavage in either 5'- to 3'- or 3'- to 5'-direction to yield nucleoside 5'-phosphates.. Bidirectionally degrades single-stranded DNA into large acid-insoluble oligonucleotides, which are then degraded further into small acid-soluble oligonucleotides. The protein is Exodeoxyribonuclease 7 small subunit of Burkholderia lata (strain ATCC 17760 / DSM 23089 / LMG 22485 / NCIMB 9086 / R18194 / 383).